Reading from the N-terminus, the 72-residue chain is Prophage late control protein OgrK (72 aa).

Functionally, cryptic version of the phage P2 OGR protein which acts as an activator of P2 late transcription. The protein is Prophage late control protein OgrK (ogrK) of Escherichia coli (strain K12).